The primary structure comprises 253 residues: 5'-nucleotidase SurE (253 aa).

The a divalent metal cation site is built by Asp8, Asp9, Ser39, and Asn92.

The protein belongs to the SurE nucleotidase family. Requires a divalent metal cation as cofactor.

It is found in the cytoplasm. The catalysed reaction is a ribonucleoside 5'-phosphate + H2O = a ribonucleoside + phosphate. In terms of biological role, nucleotidase that shows phosphatase activity on nucleoside 5'-monophosphates. The polypeptide is 5'-nucleotidase SurE (Burkholderia pseudomallei (strain 1710b)).